Here is a 32-residue protein sequence, read N- to C-terminus: Conotoxin pr6b (32 aa).

4 positions are modified to 4-hydroxyproline: proline 6, proline 13, proline 20, and proline 29. Cystine bridges form between cysteine 7-cysteine 18, cysteine 14-cysteine 23, and cysteine 17-cysteine 31.

As to expression, expressed by the venom duct.

It is found in the secreted. In terms of biological role, intraperitoneal injection into fish (0.5 nmol) provokes vertical suspension and paralysis after 6 minutes. The sequence is that of Conotoxin pr6b from Conus parius (Cone snail).